The sequence spans 637 residues: DNA mismatch repair protein MutL (637 aa).

Disordered regions lie at residues 352–384 (DDFT…NVLF) and 405–430 (ASVE…AMEQ).

This sequence belongs to the DNA mismatch repair MutL/HexB family.

Functionally, this protein is involved in the repair of mismatches in DNA. It is required for dam-dependent methyl-directed DNA mismatch repair. May act as a 'molecular matchmaker', a protein that promotes the formation of a stable complex between two or more DNA-binding proteins in an ATP-dependent manner without itself being part of a final effector complex. In Halalkalibacterium halodurans (strain ATCC BAA-125 / DSM 18197 / FERM 7344 / JCM 9153 / C-125) (Bacillus halodurans), this protein is DNA mismatch repair protein MutL.